The following is a 542-amino-acid chain: NXPE family member 4 (542 aa).

Residues 1 to 26 form the signal peptide; it reads MKMMASRKSLWVLLFIVIFWISFTVF. Residues asparagine 91, asparagine 92, asparagine 159, and asparagine 223 are each glycosylated (N-linked (GlcNAc...) asparagine).

This sequence belongs to the NXPE family.

It localises to the secreted. The chain is NXPE family member 4 (Nxpe4) from Rattus norvegicus (Rat).